The sequence spans 78 residues: Large ribosomal subunit protein bL28 (78 aa).

Residues 1–22 form a disordered region; it reads MSKVCQVTGKRPTTGNNVSHAN. Polar residues predominate over residues 11-22; the sequence is RPTTGNNVSHAN.

This sequence belongs to the bacterial ribosomal protein bL28 family.

In Alkalilimnicola ehrlichii (strain ATCC BAA-1101 / DSM 17681 / MLHE-1), this protein is Large ribosomal subunit protein bL28.